Consider the following 237-residue polypeptide: Ribonuclease PH (237 aa).

Residues arginine 86 and 124–126 contribute to the phosphate site; that span reads GTR.

Belongs to the RNase PH family. In terms of assembly, homohexameric ring arranged as a trimer of dimers.

It carries out the reaction tRNA(n+1) + phosphate = tRNA(n) + a ribonucleoside 5'-diphosphate. Phosphorolytic 3'-5' exoribonuclease that plays an important role in tRNA 3'-end maturation. Removes nucleotide residues following the 3'-CCA terminus of tRNAs; can also add nucleotides to the ends of RNA molecules by using nucleoside diphosphates as substrates, but this may not be physiologically important. Probably plays a role in initiation of 16S rRNA degradation (leading to ribosome degradation) during starvation. This is Ribonuclease PH from Roseobacter denitrificans (strain ATCC 33942 / OCh 114) (Erythrobacter sp. (strain OCh 114)).